Reading from the N-terminus, the 63-residue chain is DNA gyrase inhibitor YacG (63 aa).

Residues Cys10, Cys13, Cys29, and Cys33 each contribute to the Zn(2+) site.

Belongs to the DNA gyrase inhibitor YacG family. As to quaternary structure, interacts with GyrB. Zn(2+) is required as a cofactor.

In terms of biological role, inhibits all the catalytic activities of DNA gyrase by preventing its interaction with DNA. Acts by binding directly to the C-terminal domain of GyrB, which probably disrupts DNA binding by the gyrase. The polypeptide is DNA gyrase inhibitor YacG (Chromobacterium violaceum (strain ATCC 12472 / DSM 30191 / JCM 1249 / CCUG 213 / NBRC 12614 / NCIMB 9131 / NCTC 9757 / MK)).